An 85-amino-acid chain; its full sequence is Small ribosomal subunit protein bS18 (85 aa).

The protein belongs to the bacterial ribosomal protein bS18 family. Part of the 30S ribosomal subunit. Forms a tight heterodimer with protein bS6.

In terms of biological role, binds as a heterodimer with protein bS6 to the central domain of the 16S rRNA, where it helps stabilize the platform of the 30S subunit. This chain is Small ribosomal subunit protein bS18, found in Solidesulfovibrio magneticus (strain ATCC 700980 / DSM 13731 / RS-1) (Desulfovibrio magneticus).